The sequence spans 102 residues: Small ribosomal subunit protein uS14 (102 aa).

This sequence belongs to the universal ribosomal protein uS14 family. In terms of assembly, part of the 30S ribosomal subunit. Contacts proteins S3 and S10.

In terms of biological role, binds 16S rRNA, required for the assembly of 30S particles and may also be responsible for determining the conformation of the 16S rRNA at the A site. The chain is Small ribosomal subunit protein uS14 from Dichelobacter nodosus (strain VCS1703A).